A 331-amino-acid polypeptide reads, in one-letter code: N-arachidonyl glycine receptor (331 aa).

Residues 1–26 are Extracellular-facing; the sequence is MAIPSNRDQLALSNGSHPEEYKIAAL. Asn14 is a glycosylation site (N-linked (GlcNAc...) asparagine). Residues 27–47 form a helical membrane-spanning segment; sequence VFYSCIFLIGLLVNVTALWVF. Topologically, residues 48–56 are cytoplasmic; the sequence is SCTTKKRTT. A helical membrane pass occupies residues 57 to 77; sequence VTIYMMNVALLDLVFILSLPF. Topologically, residues 78–95 are extracellular; the sequence is RMFYYAKGEWPFGDYFCH. Cys94 and Cys172 are joined by a disulfide. The chain crosses the membrane as a helical span at residues 96–116; sequence ILGALVVFYPSLALWLLALIS. Over 117-138 the chain is Cytoplasmic; sequence ADRYMAIVQPKYAKELKNTGKA. The helical transmembrane segment at 139 to 159 threads the bilayer; sequence VLACVGVWIMTLTTTVPLLLL. Residues 160 to 191 lie on the Extracellular side of the membrane; it reads DEDPDKASSPATCLKISDIIHLKAVNVLNFTR. An N-linked (GlcNAc...) asparagine glycan is attached at Asn188. Residues 192-212 traverse the membrane as a helical segment; sequence LIFFFLIPLFIMIGCYVVIIH. The Cytoplasmic segment spans residues 213-236; the sequence is SLLRGQTSKLKPKVKEKSIRIIVT. A helical membrane pass occupies residues 237-257; it reads LLLQVLACFVPFHICFALLML. The Extracellular portion of the chain corresponds to 258-268; that stretch reads QGEENSYSPWG. A helical transmembrane segment spans residues 269 to 289; the sequence is AFTTFLMNLSTCLDVVLYYIV. The Cytoplasmic portion of the chain corresponds to 290-331; it reads SKQFQARVISVMLYRNYLRSVRRKSVRSGSLRSLSNMNSEML. The residue at position 322 (Ser322) is a Phosphoserine.

It belongs to the G-protein coupled receptor 1 family. In terms of tissue distribution, expressed in testis, spleen and brain (at protein level).

It is found in the cell membrane. The protein resides in the cytoplasmic vesicle membrane. G protein-coupled receptor (GPCR) that plays a role in diverse physiological processes particularly within the immune and nervous systems. Becomes active when triggered by various endogenous ligands including endocannabinoid N-arachidonyl glycine (NAGly), delta-9-tetrahydrocannabinol or resolvin D2/RvD2 derived from the omega-3 fatty acid docosahexaenoic acid (DHA). Upon RvD2 binding, facilitates the resolution of inflammation, aiding in tissue repair and homeostasis. Mechanistically, RvD2 ligation initiates Galphas protein coupling, activation of cAMP-PKA signaling pathway and phosphorylation of STAT3, leading to RvD2-stimulated macrophage phagocytosis. Mediates NAGly-induced process of reorganization of actin filaments and induction of acrosomal exocytosis. Activation by N-arachidonoyl glycine (NAGly) can also induce apoptosis in macrophages. Plays a role in homeostasis of CD8+ subsets of intraepithelial lymphocytes (IELs) (CD8alphaalpha and CD8alphabeta IELs) in small intestine by supporting preferential migration of CD8alphaalpha T-cells to intraepithelial compartment over lamina propria compartment, and by mediating their reconstitution into small intestine after bone marrow transplant. Participates also in hypotensive responses, mediating reduction in intraocular and blood pressure. The sequence is that of N-arachidonyl glycine receptor from Rattus norvegicus (Rat).